A 440-amino-acid polypeptide reads, in one-letter code: MDEILAKAGSQAVTFAIKSGISIASTYALKTITNFVVQIPKDDARRIDQLKFKLESRMAIVSSAIDLIKLVAARGNTNLQITLRLTKDLKEEIDRFDEKINEMTQKVEGSRSAKTQNEAIKAVENYIKDLLLRIEEITPFINLSLTTSGANLNSALPYQLSPGLLLKASDFVSENNRKYEKAMKSNEKGTGDKEILKVQVGPTFEVTLFSIFYNLTSENNGQSGIVWKEDMKRAKARIYRLNSTGRKYDYFMKIEQDFNDGRYHEDDDKEDTPQELAIDLNHIKKLFFSVSGKLLRLEEQDSPVLVLKIDRSDDKENESSEGDKGLLDDITWYAVSGYEAIEEDEEEDEEEDEEEGKDGEERKEEEEEENKLEDKDSSITLLEYIIRLTSLQSNDQKSILEVSDERLSIYLNDENTNSRKDRISNSTIEETEKKLKNLKL.

The RanBD1 domain maps to 1-314; that stretch reads MDEILAKAGS…LVLKIDRSDD (314 aa). Residue T272 is modified to Phosphothreonine. Positions 341 to 371 are enriched in acidic residues; sequence IEEDEEEDEEEDEEEGKDGEERKEEEEEENK. Positions 341–375 are disordered; sequence IEEDEEEDEEEDEEEGKDGEERKEEEEEENKLEDK.

In terms of assembly, interacts with GSP1.

Its subcellular location is the cytoplasm. The protein resides in the nucleus. Its function is as follows. Important for the export of protein containing nuclear export signal (NES) out of the nucleus. Stimulates the GTPase activity of GSP1. In Saccharomyces cerevisiae (strain ATCC 204508 / S288c) (Baker's yeast), this protein is Ran-specific GTPase-activating protein 30 (YRB30).